A 181-amino-acid polypeptide reads, in one-letter code: Peptidyl-tRNA hydrolase (181 aa).

Y14 provides a ligand contact to tRNA. The Proton acceptor role is filled by H19. The tRNA site is built by Y62, N64, and N108.

It belongs to the PTH family. As to quaternary structure, monomer.

The protein localises to the cytoplasm. It carries out the reaction an N-acyl-L-alpha-aminoacyl-tRNA + H2O = an N-acyl-L-amino acid + a tRNA + H(+). Hydrolyzes ribosome-free peptidyl-tRNAs (with 1 or more amino acids incorporated), which drop off the ribosome during protein synthesis, or as a result of ribosome stalling. In terms of biological role, catalyzes the release of premature peptidyl moieties from peptidyl-tRNA molecules trapped in stalled 50S ribosomal subunits, and thus maintains levels of free tRNAs and 50S ribosomes. The chain is Peptidyl-tRNA hydrolase from Campylobacter jejuni subsp. doylei (strain ATCC BAA-1458 / RM4099 / 269.97).